Reading from the N-terminus, the 227-residue chain is ATP-dependent dethiobiotin synthetase BioD (227 aa).

13 to 18 (DIGKTY) lines the ATP pocket. Threonine 17 contacts Mg(2+). Lysine 38 is an active-site residue. Residue serine 42 coordinates substrate. Residues aspartate 55, 116-119 (EGSG), and 179-180 (NN) each bind ATP. The Mg(2+) site is built by aspartate 55 and glutamate 116.

The protein belongs to the dethiobiotin synthetase family. In terms of assembly, homodimer. The cofactor is Mg(2+).

It is found in the cytoplasm. The enzyme catalyses (7R,8S)-7,8-diammoniononanoate + CO2 + ATP = (4R,5S)-dethiobiotin + ADP + phosphate + 3 H(+). It functions in the pathway cofactor biosynthesis; biotin biosynthesis; biotin from 7,8-diaminononanoate: step 1/2. Functionally, catalyzes a mechanistically unusual reaction, the ATP-dependent insertion of CO2 between the N7 and N8 nitrogen atoms of 7,8-diaminopelargonic acid (DAPA, also called 7,8-diammoniononanoate) to form a ureido ring. The protein is ATP-dependent dethiobiotin synthetase BioD of Clostridium botulinum (strain Alaska E43 / Type E3).